Reading from the N-terminus, the 248-residue chain is 1-(5-phosphoribosyl)-5-[(5-phosphoribosylamino)methylideneamino] imidazole-4-carboxamide isomerase (248 aa).

Asp7 acts as the Proton acceptor in catalysis. Asp131 (proton donor) is an active-site residue.

This sequence belongs to the HisA/HisF family.

It localises to the cytoplasm. The catalysed reaction is 1-(5-phospho-beta-D-ribosyl)-5-[(5-phospho-beta-D-ribosylamino)methylideneamino]imidazole-4-carboxamide = 5-[(5-phospho-1-deoxy-D-ribulos-1-ylimino)methylamino]-1-(5-phospho-beta-D-ribosyl)imidazole-4-carboxamide. It functions in the pathway amino-acid biosynthesis; L-histidine biosynthesis; L-histidine from 5-phospho-alpha-D-ribose 1-diphosphate: step 4/9. The protein is 1-(5-phosphoribosyl)-5-[(5-phosphoribosylamino)methylideneamino] imidazole-4-carboxamide isomerase of Baumannia cicadellinicola subsp. Homalodisca coagulata.